Consider the following 157-residue polypeptide: Protein Smg (157 aa).

Belongs to the Smg family.

In Escherichia coli O6:H1 (strain CFT073 / ATCC 700928 / UPEC), this protein is Protein Smg.